A 126-amino-acid polypeptide reads, in one-letter code: MDAVTVYHGKISREMGEKLLLATGLDGSYLLRDSESVPGVYCLCVLYQGYIYTYRVSQTETGSWSAETAPGVHKRFFRKVKNLISAFQKPDQGIVTPLQYPVEKSSARSPQAPTGRRDSDICLKAP.

The SH2 domain maps to 6–102 (VYHGKISREM…GIVTPLQYPV (97 aa)). Residues 67 to 92 (ETAPGVHKRFFRKVKNLISAFQKPDQ) form an interaction with FYN SH3 domain region. An N6-acetyllysine modification is found at Lys-89. Residues 100-126 (YPVEKSSARSPQAPTGRRDSDICLKAP) form a disordered region. Basic and acidic residues predominate over residues 115–126 (GRRDSDICLKAP). At Ser-119 the chain carries Phosphoserine.

In terms of assembly, interacts with CD84, CD244, LY9, SLAMF1 and FYN. Interacts with NTRK1, NTRK2 and NTRK3.

The protein resides in the cytoplasm. In terms of biological role, cytoplasmic adapter regulating receptors of the signaling lymphocytic activation molecule (SLAM) family such as SLAMF1, CD244, LY9, CD84, SLAMF6 and SLAMF7. In SLAM signaling seems to cooperate with SH2D1B/EAT-2. Initially it has been proposed that association with SLAMF1 prevents SLAMF1 binding to inhibitory effectors including INPP5D/SHIP1 and PTPN11/SHP-2. However, by simultaneous interactions, recruits FYN which subsequently phosphorylates and activates SLAMF1. Positively regulates CD244/2B4- and CD84-mediated natural killer (NK) cell functions. Can also promote CD48-, SLAMF6 -, LY9-, and SLAMF7-mediated NK cell activation. In the context of NK cell-mediated cytotoxicity enhances conjugate formation with target cells. May also regulate the activity of the neurotrophin receptors NTRK1, NTRK2 and NTRK3. The protein is SH2 domain-containing protein 1A (Sh2d1a) of Rattus norvegicus (Rat).